Reading from the N-terminus, the 442-residue chain is 3-phosphoshikimate 1-carboxyvinyltransferase (442 aa).

The 3-phosphoshikimate site is built by K25, S26, and R30. Phosphoenolpyruvate is bound at residue K25. Residues G97 and R125 each contribute to the phosphoenolpyruvate site. Residues S170, Q172, D323, and K350 each coordinate 3-phosphoshikimate. Q172 is a phosphoenolpyruvate binding site. The active-site Proton acceptor is D323. Phosphoenolpyruvate contacts are provided by R354 and R399.

Belongs to the EPSP synthase family. In terms of assembly, monomer.

It localises to the cytoplasm. It catalyses the reaction 3-phosphoshikimate + phosphoenolpyruvate = 5-O-(1-carboxyvinyl)-3-phosphoshikimate + phosphate. It functions in the pathway metabolic intermediate biosynthesis; chorismate biosynthesis; chorismate from D-erythrose 4-phosphate and phosphoenolpyruvate: step 6/7. In terms of biological role, catalyzes the transfer of the enolpyruvyl moiety of phosphoenolpyruvate (PEP) to the 5-hydroxyl of shikimate-3-phosphate (S3P) to produce enolpyruvyl shikimate-3-phosphate and inorganic phosphate. The protein is 3-phosphoshikimate 1-carboxyvinyltransferase of Bartonella henselae (strain ATCC 49882 / DSM 28221 / CCUG 30454 / Houston 1) (Rochalimaea henselae).